A 554-amino-acid polypeptide reads, in one-letter code: Trichloroethene reductive dehalogenase (554 aa).

Positions 1-42 (MSEKYHSTVTRRDFMKRLGLAGAGAGALGAAVLAENNLPHEF) form a signal peptide, tat-type signal. 2 4Fe-4S ferredoxin-type domains span residues 425 to 457 (PTKP…HEGP) and 471 to 500 (EGWH…NNSW). 8 residues coordinate [4Fe-4S] cluster: C437, C440, C443, C447, C480, C483, C486, and C490.

The protein belongs to the PceA family. [4Fe-4S] cluster is required as a cofactor. Requires corrinoid as cofactor. In terms of processing, predicted to be exported by the Tat system. The position of the signal peptide cleavage has been experimentally proven.

Its subcellular location is the cell membrane. It carries out the reaction trichloroethene + AH2 = (Z)-1,2-dichloroethene + chloride + A + H(+). It catalyses the reaction (Z)-1,2-dichloroethene + AH2 = chloroethene + chloride + A + H(+). The catalysed reaction is 1,1-dichloroethene + AH2 = chloroethene + chloride + A + H(+). With respect to regulation, loses 93% of its activity upon incubation with 1-iodopropane and titanium(III) citrate in the dark. Subsequent exposure to light restores 80% of the original activity. Completely inhibited by 2 mM sodium sulfite or sodium dithionite, and by 1 mM cuprous chloride. Its function is as follows. Catalyzes the reductive dechlorination of trichloroethene (TCE) to cis-1,2-dichloroethene (DCE) and of cis-1,2-dichloroethene to chloroethene. The substrate specificity is broad, and the enzyme can dehalogenate various substrates, including 1,1-dichloroethene (1,1-DCE), 1,2-dichloroethane and 1,2-dibromoethane. A variety of other haloalkanes and haloalkenes containing three to five carbon atoms are dehalogenated at lower rates. Trans-1,2-dichloroethene (trans-DCE) and chloroethene are degraded at rates which are approximately 2 orders of magnitude lower. Titanium(III) citrate and methyl viologen can be used as reductants. This chain is Trichloroethene reductive dehalogenase, found in Dehalococcoides mccartyi (strain ATCC BAA-2266 / KCTC 15142 / 195) (Dehalococcoides ethenogenes (strain 195)).